Here is a 62-residue protein sequence, read N- to C-terminus: Conotoxin TxIC (62 aa).

The signal sequence occupies residues 1 to 22 (MHCLPIFVILLLLTASGPSVDA). The propeptide occupies 23–47 (QLKTKDDVPLSSFRDHAKSTLRRLQ). Intrachain disulfides connect cysteine 52–cysteine 58 and cysteine 53–cysteine 61. 4-hydroxyproline is present on proline 60. Cysteine 61 carries the post-translational modification Cysteine amide.

Belongs to the conotoxin A superfamily. In terms of tissue distribution, expressed by the venom duct.

It is found in the secreted. The chain is Conotoxin TxIC from Conus textile (Cloth-of-gold cone).